The primary structure comprises 372 residues: Enoyl-[acyl-carrier-protein] reductase, mitochondrial (372 aa).

A mitochondrion-targeting transit peptide spans 1-18; the sequence is MSFFKTAVRRFSSTSITR. Tyr72 (proton donor) is an active-site residue. Residues Asn157, 183-186, 206-208, 279-282, 304-306, and Lys365 each bind NADP(+); these read NSMV, RNR, FGGM, and FWV.

It belongs to the zinc-containing alcohol dehydrogenase family. Quinone oxidoreductase subfamily. Homodimer.

It is found in the mitochondrion matrix. The enzyme catalyses a 2,3-saturated acyl-[ACP] + NADP(+) = a (2E)-enoyl-[ACP] + NADPH + H(+). In terms of biological role, catalyzes the NADPH-dependent reduction of trans-2-enoyl thioesters in mitochondrial fatty acid synthesis (fatty acid synthesis type II). Fatty acid chain elongation in mitochondria uses acyl carrier protein (ACP) as an acyl group carrier, but the enzyme accepts both ACP and CoA thioesters as substrates in vitro. Required for respiration and the maintenance of the mitochondrial compartment. This Schizosaccharomyces pombe (strain 972 / ATCC 24843) (Fission yeast) protein is Enoyl-[acyl-carrier-protein] reductase, mitochondrial (etr1).